The following is a 1213-amino-acid chain: tRNA wybutosine-synthesizing protein 4 (1213 aa).

Low complexity-rich tracts occupy residues M1–T13 and A39–T52. The segment at M1–S76 is disordered. A compositionally biased stretch (basic and acidic residues) spans H53 to D67. R117, G148, and D180 together coordinate S-adenosyl-L-methionine. A compositionally biased stretch (low complexity) spans S215–P248. A disordered region spans residues S215–A272. Residues D289–L290 and E318 each bind S-adenosyl-L-methionine. Positions E879–S900 are disordered. Residues P1006–N1166 enclose the JmjC domain.

This sequence belongs to the methyltransferase superfamily. LCMT family.

It catalyses the reaction 7-[(3S)-3-amino-3-carboxypropyl]wyosine(37) in tRNA(Phe) + S-adenosyl-L-methionine = 7-[(3S)-(3-amino-3-methoxycarbonyl)propyl]wyosine(37) in tRNA(Phe) + S-adenosyl-L-homocysteine. The enzyme catalyses 7-[(3S)-(3-amino-3-methoxycarbonyl)propyl]wyosine(37) in tRNA(Phe) + S-adenosyl-L-methionine + CO2 = wybutosine(37) in tRNA(Phe) + S-adenosyl-L-homocysteine + 2 H(+). Its pathway is tRNA modification; wybutosine-tRNA(Phe) biosynthesis. Probable S-adenosyl-L-methionine-dependent methyltransferase that acts as a component of the wybutosine biosynthesis pathway. Wybutosine is a hyper modified guanosine with a tricyclic base found at the 3'-position adjacent to the anticodon of eukaryotic phenylalanine tRNA. May methylate the carboxyl group of leucine residues to form alpha-leucine ester residues. In Neurospora crassa (strain ATCC 24698 / 74-OR23-1A / CBS 708.71 / DSM 1257 / FGSC 987), this protein is tRNA wybutosine-synthesizing protein 4 (lcm-2).